A 31-amino-acid chain; its full sequence is Chymotrypsin (31 aa).

The region spanning 1 to 31 (IVGGVEAVPGVWPYQAALFIIDMYFCGGSLI) is the Peptidase S1 domain.

This sequence belongs to the peptidase S1 family.

The protein resides in the secreted. Its subcellular location is the extracellular space. It carries out the reaction Preferential cleavage: Tyr-|-Xaa, Trp-|-Xaa, Phe-|-Xaa, Leu-|-Xaa.. This is Chymotrypsin from Penaeus monodon (Giant tiger prawn).